A 436-amino-acid chain; its full sequence is Glutamate-1-semialdehyde 2,1-aminomutase (436 aa).

An N6-(pyridoxal phosphate)lysine modification is found at lysine 269.

Belongs to the class-III pyridoxal-phosphate-dependent aminotransferase family. HemL subfamily. In terms of assembly, homodimer. The cofactor is pyridoxal 5'-phosphate.

The protein resides in the cytoplasm. It carries out the reaction (S)-4-amino-5-oxopentanoate = 5-aminolevulinate. It functions in the pathway porphyrin-containing compound metabolism; protoporphyrin-IX biosynthesis; 5-aminolevulinate from L-glutamyl-tRNA(Glu): step 2/2. The protein operates within porphyrin-containing compound metabolism; chlorophyll biosynthesis. The protein is Glutamate-1-semialdehyde 2,1-aminomutase of Heliobacterium modesticaldum (strain ATCC 51547 / Ice1).